The sequence spans 590 residues: Aspartate--tRNA ligase (590 aa).

Glu-180 contacts L-aspartate. The interval 204-207 (QLFK) is aspartate. Arg-226 provides a ligand contact to L-aspartate. Residues 226 to 228 (RDE) and Gln-235 each bind ATP. His-454 lines the L-aspartate pocket. Glu-488 contacts ATP. Arg-495 lines the L-aspartate pocket. Residue 540–543 (GFDR) coordinates ATP.

The protein belongs to the class-II aminoacyl-tRNA synthetase family. Type 1 subfamily. As to quaternary structure, homodimer.

The protein localises to the cytoplasm. It catalyses the reaction tRNA(Asp) + L-aspartate + ATP = L-aspartyl-tRNA(Asp) + AMP + diphosphate. Its function is as follows. Catalyzes the attachment of L-aspartate to tRNA(Asp) in a two-step reaction: L-aspartate is first activated by ATP to form Asp-AMP and then transferred to the acceptor end of tRNA(Asp). This is Aspartate--tRNA ligase from Clostridium kluyveri (strain NBRC 12016).